Reading from the N-terminus, the 106-residue chain is Large ribosomal subunit protein uL24 (106 aa).

The protein belongs to the universal ribosomal protein uL24 family. Part of the 50S ribosomal subunit.

In terms of biological role, one of two assembly initiator proteins, it binds directly to the 5'-end of the 23S rRNA, where it nucleates assembly of the 50S subunit. One of the proteins that surrounds the polypeptide exit tunnel on the outside of the subunit. This Erythrobacter litoralis (strain HTCC2594) protein is Large ribosomal subunit protein uL24.